Consider the following 436-residue polypeptide: WD repeat domain phosphoinositide-interacting protein 2 (436 aa).

The stretch at 182–222 is one WD 1 repeat; sequence AHDSPLAALAFDASGTKLATASEKGTVIRVFSIPEGQKLFE. Positions 223 to 226 match the L/FRRG motif motif; that stretch reads FRRG. 2 WD repeats span residues 228–267 and 311–349; these read KRCV…EKPQ and GHKN…GGEC.

The protein belongs to the WD repeat PROPPIN family.

The protein localises to the preautophagosomal structure membrane. Its function is as follows. Component of the autophagy machinery that controls the major intracellular degradation process by which cytoplasmic materials are packaged into autophagosomes and delivered to lysosomes for degradation. Involved in an early step of the formation of preautophagosomal structures. The chain is WD repeat domain phosphoinositide-interacting protein 2 (WIPI2) from Gallus gallus (Chicken).